Reading from the N-terminus, the 347-residue chain is A-type ATP synthase subunit C (347 aa).

Belongs to the V-ATPase V0D/AC39 subunit family. As to quaternary structure, has multiple subunits with at least A(3), B(3), C, D, E, F, H, I and proteolipid K(x).

The protein localises to the cell membrane. Its function is as follows. Component of the A-type ATP synthase that produces ATP from ADP in the presence of a proton gradient across the membrane. This is A-type ATP synthase subunit C from Haloquadratum walsbyi (strain DSM 16790 / HBSQ001).